The chain runs to 43 residues: Protein PsbN (43 aa).

A helical transmembrane segment spans residues 7-27 (LIVFIASLLLGVTGYSVYTAF).

It belongs to the PsbN family.

It is found in the plastid. Its subcellular location is the chloroplast thylakoid membrane. May play a role in photosystem I and II biogenesis. The chain is Protein PsbN from Rhodomonas salina (Cryptomonas salina).